A 234-amino-acid chain; its full sequence is LRP chaperone MESD (234 aa).

Residues 1–33 (MAASRWARKAVVLLCASDLLLLLLLLPPPGSCA) form the signal peptide. A chaperone domain region spans residues 1–164 (MAASRWARKA…DRAIFMLRDG (164 aa)). Disordered regions lie at residues 31-95 (SCAA…DFSK) and 187-234 (GQVY…REDL). Over residues 54-70 (DIRDYNDADMARLLEQW) the composition is skewed to basic and acidic residues. Residues 71–80 (EKDDDIEEGD) show a composition bias toward acidic residues. An escort domain region spans residues 165–204 (SYAWEIKDFLVGQDRCADVTLEGQVYPGKGGGSKEKNKTK). Residues 196 to 234 (GSKEKNKTKQDKGKKKKEGDLKSRSSKEENRAGNKREDL) are compositionally biased toward basic and acidic residues. An N-linked (GlcNAc...) asparagine glycan is attached at N201. The short motif at 231–234 (REDL) is the Prevents secretion from ER element.

This sequence belongs to the MESD family. In terms of assembly, monomer. Interacts with LRP5; the interaction prevents LRP5 from forming aggregates and chaperones LRP6 to the plasma membrane. Interacts with LRP6; the interaction prevents LRP6 from forming aggregates and chaperones LRP6 to the plasma membrane. Interacts with LRP4; the interaction promotes glycosylation of LRP4 and its cell-surface expression.

The protein resides in the endoplasmic reticulum. Chaperone specifically assisting the folding of beta-propeller/EGF modules within the family of low-density lipoprotein receptors (LDLRs). Acts as a modulator of the Wnt pathway through chaperoning the coreceptors of the canonical Wnt pathway, LRP5 and LRP6, to the plasma membrane. Essential for specification of embryonic polarity and mesoderm induction. Plays an essential role in neuromuscular junction (NMJ) formation by promoting cell-surface expression of LRP4. May regulate phagocytosis of apoptotic retinal pigment epithelium (RPE) cells. This chain is LRP chaperone MESD, found in Homo sapiens (Human).